A 134-amino-acid chain; its full sequence is Bradykinin-related peptides (134 aa).

The N-terminal stretch at 1–22 (MAFLKKSLFLVLFLGVVSLSFC) is a signal peptide. Propeptides lie at residues 23–44 (EEEK…ESLG), 71–82 (RSISGLTPIRLS), and 99–121 (ISEA…PLRG). Residues 24-33 (EEKREEHEEE) show a composition bias toward basic and acidic residues. A disordered region spans residues 24–71 (EEKREEHEEEKRDEEDAESLGKRYGGLSPLRISKRVPPGFTPFRSPAR). The residue at position 126 (P126) is a 4-hydroxyproline; partial; in form [Hyp3]-bradykinin and [Hyp3]-bradykinin-Val,Asp.

It belongs to the frog skin active peptide (FSAP) family. Bradykinin-related peptide subfamily. As to expression, expressed by the skin glands. Expression levels in inguinal glands are much higher than in granular glands.

It is found in the secreted. In terms of biological role, may produce in vitro relaxation of rat arterial smooth muscle and constriction of intestinal smooth muscle. May target bradykinin receptors (BDKRB). The polypeptide is Bradykinin-related peptides (Physalaemus nattereri (Cuyaba dwarf frog)).